A 130-amino-acid chain; its full sequence is Small ribosomal subunit protein uS8 (130 aa).

The protein belongs to the universal ribosomal protein uS8 family. In terms of assembly, part of the 30S ribosomal subunit. Contacts proteins S5 and S12.

One of the primary rRNA binding proteins, it binds directly to 16S rRNA central domain where it helps coordinate assembly of the platform of the 30S subunit. The sequence is that of Small ribosomal subunit protein uS8 from Idiomarina loihiensis (strain ATCC BAA-735 / DSM 15497 / L2-TR).